Reading from the N-terminus, the 115-residue chain is Con-Ins G1b (115 aa).

An N-terminal signal peptide occupies residues 1–24 (MTTSFYFLLMALGLLLYVCQSSFG). Positions 25-29 (NQHTR) are excised as a propeptide. Residue P34 is modified to 4-hydroxyproline; partial. 3 cysteine pairs are disulfide-bonded: C38–C101, C50–C114, and C100–C105. E41 is subject to 4-carboxyglutamate. The propeptide at 52-94 (RKRNDAGEKRGRASPLWQRRGFLSKLKARAKRNGAFHLPRDGR) is c peptide. 4-carboxyglutamate is present on E98. P104 is modified (4-hydroxyproline; partial). At E109 the chain carries 4-carboxyglutamate; partial. C114 is subject to Cysteine amide.

Belongs to the insulin family. In terms of assembly, heterodimer of A and B chains; disulfide-linked. In terms of tissue distribution, expressed by the venom gland.

It is found in the secreted. Functionally, this venom insulin, from a fish-hunting cone snail, facilitates prey capture by rapidly inducing hypoglycemic shock. It is one of the smallest known insulin found in nature and lacks the C-terminal segment of the B chain that, in human insulin, mediates engagement of the insulin receptor (INSR) and assembly of the hormone's hexameric storage form. Despite lacking this segment, it both binds and activates human insulin receptor (long isoform (HIR-B) of INSR) with only a 10-fold lower potency. In vivo, intraperitoneal injection of this peptide into zebrafish lowers blood glucose with the same potency than human insulin. In addition, when applied to water, this peptide reduces overall locomotor activity of zebrafish larvae, observed as a significant decrease in the percentage of time spent swimming and movement frequency. This chain is Con-Ins G1b, found in Conus geographus (Geography cone).